Consider the following 855-residue polypeptide: DNA mismatch repair protein MutS (855 aa).

616–623 is an ATP binding site; it reads GPNMGGKS.

It belongs to the DNA mismatch repair MutS family.

Functionally, this protein is involved in the repair of mismatches in DNA. It is possible that it carries out the mismatch recognition step. This protein has a weak ATPase activity. The chain is DNA mismatch repair protein MutS from Escherichia coli O139:H28 (strain E24377A / ETEC).